Reading from the N-terminus, the 358-residue chain is D-xylulose reductase A (358 aa).

The Zn(2+) site is built by Cys-47, His-72, and Glu-73. Gly-182 to Gly-187 provides a ligand contact to NAD(+).

This sequence belongs to the zinc-containing alcohol dehydrogenase family. Zn(2+) serves as cofactor.

It catalyses the reaction xylitol + NAD(+) = D-xylulose + NADH + H(+). Its pathway is carbohydrate degradation; L-arabinose degradation via L-arabinitol; D-xylulose 5-phosphate from L-arabinose (fungal route): step 4/5. In terms of biological role, xylitol dehydrogenase which catalyzes the conversion of xylitol to D-xylulose. Xylose is a major component of hemicelluloses such as xylan. Most fungi utilize D-xylose via three enzymatic reactions, xylose reductase (XR), xylitol dehydrogenase (XDH), and xylulokinase, to form xylulose 5-phosphate, which enters pentose phosphate pathway. The chain is D-xylulose reductase A (xdhA) from Aspergillus oryzae (strain ATCC 42149 / RIB 40) (Yellow koji mold).